The sequence spans 334 residues: Leucine carboxyl methyltransferase 1 (334 aa).

S-adenosyl-L-methionine is bound by residues Lys-37, Arg-73, Gly-98, Asp-122, 171–172 (DL), and Glu-198.

Belongs to the methyltransferase superfamily. LCMT family.

The enzyme catalyses [phosphatase 2A protein]-C-terminal L-leucine + S-adenosyl-L-methionine = [phosphatase 2A protein]-C-terminal L-leucine methyl ester + S-adenosyl-L-homocysteine. Functionally, methylates the carboxyl group of the C-terminal leucine residue of protein phosphatase 2A catalytic subunits to form alpha-leucine ester residues. The protein is Leucine carboxyl methyltransferase 1 (LCMT1) of Homo sapiens (Human).